The following is a 516-amino-acid chain: D-aminopeptidase (516 aa).

Ser61 acts as the Nucleophile in catalysis. The active-site Proton donor/acceptor is the Lys64. The important for specificity stretch occupies residues 476–486 (RRSMDAPAPGD). Substrate is bound at residue Asp480.

This sequence belongs to the peptidase S12 family. Homodimer.

It carries out the reaction Release of an N-terminal D-amino acid from a peptide, Xaa-|-Yaa-, in which Xaa is preferably D-Ala, D-Ser or D-Thr. D-amino acid amides and methyl esters also are hydrolyzed, as is glycine amide.. Its activity is regulated as follows. Inhibited by beta-lactam compounds such as 6-aminopenicillic acid, 7-aminocephalosporanic acid, benzylpenicillin and ampicillin. Inhibited by p-chloromercuribenzoate. Functionally, hydrolyzes N-terminal residues in D-amino acid-containing peptides. The sequence is that of D-aminopeptidase from Cereibacter sphaeroides (strain ATCC 17029 / ATH 2.4.9) (Rhodobacter sphaeroides).